Consider the following 453-residue polypeptide: Serine/threonine-protein phosphatase 2A regulatory subunit B'' subunit gamma (453 aa).

2 EF-hand domains span residues P273–N308 and K341–L376. Ca(2+) contacts are provided by D286, D288, N290, M292, and E297.

In terms of assembly, interacts with MCM3AP/GANP, PPP5C, and the phosphatase 2A core enzyme composed of the PPP2CA catalytic subunit and the constant regulatory subunit PPP2R1A. Finds in a complex with ABCB1, TFPI2 and PPP2R3C; leading to the dephosphorylation of ABCB1.

Its subcellular location is the nucleus. It is found in the cytoplasm. Functionally, may regulate MCM3AP phosphorylation through phosphatase recruitment. May act as a negative regulator of ABCB1 expression and function through the dephosphorylation of ABCB1 by TFPI2/PPP2R3C complex. May play a role in the activation-induced cell death of B-cells. The sequence is that of Serine/threonine-protein phosphatase 2A regulatory subunit B'' subunit gamma (PPP2R3C) from Bos taurus (Bovine).